The chain runs to 356 residues: Uroporphyrinogen decarboxylase (356 aa).

Residues 23–27, aspartate 72, tyrosine 148, serine 203, and histidine 321 each bind substrate; that span reads RQAGR.

Belongs to the uroporphyrinogen decarboxylase family. As to quaternary structure, homodimer.

The protein resides in the cytoplasm. It catalyses the reaction uroporphyrinogen III + 4 H(+) = coproporphyrinogen III + 4 CO2. It functions in the pathway porphyrin-containing compound metabolism; protoporphyrin-IX biosynthesis; coproporphyrinogen-III from 5-aminolevulinate: step 4/4. Its function is as follows. Catalyzes the decarboxylation of four acetate groups of uroporphyrinogen-III to yield coproporphyrinogen-III. The chain is Uroporphyrinogen decarboxylase from Chloroflexus aggregans (strain MD-66 / DSM 9485).